The chain runs to 135 residues: ATP synthase epsilon chain (135 aa).

Residues 89–100 (SGKAEAELEKAK) are compositionally biased toward basic and acidic residues. A disordered region spans residues 89 to 114 (SGKAEAELEKAKNQLSQNKDQGNSPE). Residues 101–112 (NQLSQNKDQGNS) are compositionally biased toward polar residues.

The protein belongs to the ATPase epsilon chain family. F-type ATPases have 2 components, CF(1) - the catalytic core - and CF(0) - the membrane proton channel. CF(1) has five subunits: alpha(3), beta(3), gamma(1), delta(1), epsilon(1). CF(0) has three main subunits: a, b and c.

The protein localises to the cellular thylakoid membrane. In terms of biological role, produces ATP from ADP in the presence of a proton gradient across the membrane. This Prochlorococcus marinus (strain NATL2A) protein is ATP synthase epsilon chain.